Reading from the N-terminus, the 693-residue chain is DNA ligase (693 aa).

Residues 40-44 (DSEYD), 89-90 (SL), and Glu-121 contribute to the NAD(+) site. Catalysis depends on Lys-123, which acts as the N6-AMP-lysine intermediate. NAD(+) contacts are provided by Arg-144, Glu-179, Lys-295, and Lys-319. Residues Cys-413, Cys-416, Cys-431, and Cys-437 each coordinate Zn(2+). Positions 610-693 (REQNILTGKI…AFIKCLEKEV (84 aa)) constitute a BRCT domain.

The protein belongs to the NAD-dependent DNA ligase family. LigA subfamily. Mg(2+) serves as cofactor. Mn(2+) is required as a cofactor.

The enzyme catalyses NAD(+) + (deoxyribonucleotide)n-3'-hydroxyl + 5'-phospho-(deoxyribonucleotide)m = (deoxyribonucleotide)n+m + AMP + beta-nicotinamide D-nucleotide.. In terms of biological role, DNA ligase that catalyzes the formation of phosphodiester linkages between 5'-phosphoryl and 3'-hydroxyl groups in double-stranded DNA using NAD as a coenzyme and as the energy source for the reaction. It is essential for DNA replication and repair of damaged DNA. The sequence is that of DNA ligase from Rickettsia typhi (strain ATCC VR-144 / Wilmington).